A 628-amino-acid polypeptide reads, in one-letter code: DNA ligase (628 aa).

Residues 36–40 (DVEYD), 85–86 (SL), and Glu117 each bind NAD(+). The active-site N6-AMP-lysine intermediate is Lys119. The NAD(+) site is built by Arg140, Glu174, Lys309, and Lys333. Zn(2+)-binding residues include Cys427, Cys430, Cys446, and Cys452.

It belongs to the NAD-dependent DNA ligase family. LigA subfamily. It depends on Mg(2+) as a cofactor. Requires Mn(2+) as cofactor.

The catalysed reaction is NAD(+) + (deoxyribonucleotide)n-3'-hydroxyl + 5'-phospho-(deoxyribonucleotide)m = (deoxyribonucleotide)n+m + AMP + beta-nicotinamide D-nucleotide.. In terms of biological role, DNA ligase that catalyzes the formation of phosphodiester linkages between 5'-phosphoryl and 3'-hydroxyl groups in double-stranded DNA using NAD as a coenzyme and as the energy source for the reaction. It is essential for DNA replication and repair of damaged DNA. This chain is DNA ligase, found in Tropheryma whipplei (strain Twist) (Whipple's bacillus).